The primary structure comprises 256 residues: Ribonuclease HII (256 aa).

One can recognise an RNase H type-2 domain in the interval 72-256; that stretch reads QYVAGIDEVG…TFRPVPDYVN (185 aa). A divalent metal cation is bound by residues D78, E79, and D170.

This sequence belongs to the RNase HII family. The cofactor is Mn(2+). Mg(2+) serves as cofactor.

It is found in the cytoplasm. The enzyme catalyses Endonucleolytic cleavage to 5'-phosphomonoester.. Endonuclease that specifically degrades the RNA of RNA-DNA hybrids. The sequence is that of Ribonuclease HII from Limosilactobacillus fermentum (strain NBRC 3956 / LMG 18251) (Lactobacillus fermentum).